Consider the following 121-residue polypeptide: Nitrogenase-stabilizing/protective protein NifW (121 aa).

This sequence belongs to the NifW family. In terms of assembly, homotrimer; associates with NifD.

Functionally, may protect the nitrogenase Fe-Mo protein from oxidative damage. The protein is Nitrogenase-stabilizing/protective protein NifW of Methylacidiphilum infernorum (isolate V4) (Methylokorus infernorum (strain V4)).